The chain runs to 215 residues: Cytochrome b6 (215 aa).

Residues 32-52 form a helical membrane-spanning segment; it reads IFYCLGGITLVCFLIQFATGF. Position 35 (C35) interacts with heme c. Heme b contacts are provided by H86 and H100. Transmembrane regions (helical) follow at residues 90–110, 116–136, and 186–206; these read ASMM…TGGF, LTWV…VTGY, and AHTF…FLMI. H187 and H202 together coordinate heme b.

This sequence belongs to the cytochrome b family. PetB subfamily. As to quaternary structure, the 4 large subunits of the cytochrome b6-f complex are cytochrome b6, subunit IV (17 kDa polypeptide, PetD), cytochrome f and the Rieske protein, while the 4 small subunits are PetG, PetL, PetM and PetN. The complex functions as a dimer. It depends on heme b as a cofactor. Heme c serves as cofactor.

Its subcellular location is the cellular thylakoid membrane. Component of the cytochrome b6-f complex, which mediates electron transfer between photosystem II (PSII) and photosystem I (PSI), cyclic electron flow around PSI, and state transitions. The sequence is that of Cytochrome b6 from Nostoc punctiforme (strain ATCC 29133 / PCC 73102).